The following is a 167-amino-acid chain: Crossover junction endodeoxyribonuclease RuvC (167 aa).

Active-site residues include Asp-8, Glu-67, and Asp-139. Mg(2+) contacts are provided by Asp-8, Glu-67, and Asp-139.

The protein belongs to the RuvC family. In terms of assembly, homodimer which binds Holliday junction (HJ) DNA. The HJ becomes 2-fold symmetrical on binding to RuvC with unstacked arms; it has a different conformation from HJ DNA in complex with RuvA. In the full resolvosome a probable DNA-RuvA(4)-RuvB(12)-RuvC(2) complex forms which resolves the HJ. The cofactor is Mg(2+).

The protein localises to the cytoplasm. It catalyses the reaction Endonucleolytic cleavage at a junction such as a reciprocal single-stranded crossover between two homologous DNA duplexes (Holliday junction).. Functionally, the RuvA-RuvB-RuvC complex processes Holliday junction (HJ) DNA during genetic recombination and DNA repair. Endonuclease that resolves HJ intermediates. Cleaves cruciform DNA by making single-stranded nicks across the HJ at symmetrical positions within the homologous arms, yielding a 5'-phosphate and a 3'-hydroxyl group; requires a central core of homology in the junction. The consensus cleavage sequence is 5'-(A/T)TT(C/G)-3'. Cleavage occurs on the 3'-side of the TT dinucleotide at the point of strand exchange. HJ branch migration catalyzed by RuvA-RuvB allows RuvC to scan DNA until it finds its consensus sequence, where it cleaves and resolves the cruciform DNA. This Halorhodospira halophila (strain DSM 244 / SL1) (Ectothiorhodospira halophila (strain DSM 244 / SL1)) protein is Crossover junction endodeoxyribonuclease RuvC.